The primary structure comprises 163 residues: NADH-quinone oxidoreductase subunit I (163 aa).

4Fe-4S ferredoxin-type domains lie at 54 to 84 and 94 to 123; these read LRRY…IESE and IVYD…ETQI. The [4Fe-4S] cluster site is built by C64, C67, C70, C74, C103, C106, C109, and C113.

The protein belongs to the complex I 23 kDa subunit family. NDH-1 is composed of 14 different subunits. Subunits NuoA, H, J, K, L, M, N constitute the membrane sector of the complex. The cofactor is [4Fe-4S] cluster.

Its subcellular location is the cell inner membrane. It catalyses the reaction a quinone + NADH + 5 H(+)(in) = a quinol + NAD(+) + 4 H(+)(out). Its function is as follows. NDH-1 shuttles electrons from NADH, via FMN and iron-sulfur (Fe-S) centers, to quinones in the respiratory chain. The immediate electron acceptor for the enzyme in this species is believed to be ubiquinone. Couples the redox reaction to proton translocation (for every two electrons transferred, four hydrogen ions are translocated across the cytoplasmic membrane), and thus conserves the redox energy in a proton gradient. In Ruthia magnifica subsp. Calyptogena magnifica, this protein is NADH-quinone oxidoreductase subunit I.